The following is a 216-amino-acid chain: Octanoyltransferase (216 aa).

A BPL/LPL catalytic domain is found at 30 to 216 (GEAGEAVWLL…KRQFFEVFGA (187 aa)). Residues 69–76 (RGGQYTYH), 149–151 (AIG), and 162–164 (GLS) each bind substrate. Residue Cys180 is the Acyl-thioester intermediate of the active site.

The protein belongs to the LipB family.

It localises to the cytoplasm. It catalyses the reaction octanoyl-[ACP] + L-lysyl-[protein] = N(6)-octanoyl-L-lysyl-[protein] + holo-[ACP] + H(+). It participates in protein modification; protein lipoylation via endogenous pathway; protein N(6)-(lipoyl)lysine from octanoyl-[acyl-carrier-protein]: step 1/2. Its function is as follows. Catalyzes the transfer of endogenously produced octanoic acid from octanoyl-acyl-carrier-protein onto the lipoyl domains of lipoate-dependent enzymes. Lipoyl-ACP can also act as a substrate although octanoyl-ACP is likely to be the physiological substrate. This is Octanoyltransferase from Jannaschia sp. (strain CCS1).